The primary structure comprises 839 residues: MPQLDVDKTIEELRLGEKIDLVSGIDFWHTASVPRLNIPSLRMSDGPNGVRGTRFFNGVPAACFPCATALGATWDTELLHKVGHLMGEEAIAKGAHVILGPTINTQRSPLGGRGFESFAEDGVLAGHLAGYCSKGIQEKGVAACLKHFVCNDQEHERLAVDSIVTDRATREIYLLPFQIAMRICKTATVMTAYNKINGTHVSENKKYITDILRKEWGWDGLVMSDWFGTYSCTSESIIAGLDIEMPGKTRWRGDALAHAVSSNKVHEFVLDERVRNVLNLVNYVEPLGIPENAEEKVLNRPEDQALLRRAAAESIVLLKNEDNILPFNKEKSIAVIGPNAKIAAYCGGGSASLDAYYTITPFEGVSAQSKGEVHFAQGSYSYKDLPLIGHLLKTDDGKTGFKFRVYDEPASSSNRELLHELHLVSSQGFLMDYRHPKIKSYLYYVDMEGYFTPEESGVYDFGVVVVGTGKLLVDDEVVVDNTKNQRLGSAFFGNGTVEEKGSKELMAGQKYKITFQFGTAPTSDIDTRGVVIFGPGGFRFGAARRQTQEELISKAVEVASKADQVVVFAGLTSEWETEGYDRPDMDLPPGSDELISKILEVKPNAAIVIQSGTPVTMPWAPKAKALLQAWFGGNECGNGIADVLYGNVNPSGKLPLTFPVRLQDNPSYLNFRSERGRVLYGEDIYVGYRYYEKAQLPPLFPFGHGLSYTTFTREKLELNTSPEKDKLQDGEPITARVTVTNTGKVAGAETVQLWVVPPPTEVNRPVRELKGFAKVHLEPGESKDVEIVVEKKLATSWWDEKREAWASEKGVYWVQVTGTGEGVLTAEFEVKKTRFWTGL.

N-linked (GlcNAc...) asparagine glycosylation occurs at Asn197. The active site involves Asp225. A PA14 domain is found at 396–556 (DGKTGFKFRV…TQEELISKAV (161 aa)). A glycan (N-linked (GlcNAc...) asparagine) is linked at Asn494.

Belongs to the glycosyl hydrolase 3 family.

The protein resides in the secreted. It catalyses the reaction Hydrolysis of terminal, non-reducing beta-D-glucosyl residues with release of beta-D-glucose.. It participates in glycan metabolism; cellulose degradation. Beta-glucosidases are one of a number of cellulolytic enzymes, and catalyze the last step releasing glucose from the inhibitory cellobiose. The polypeptide is Probable beta-glucosidase I (bglI) (Emericella nidulans (strain FGSC A4 / ATCC 38163 / CBS 112.46 / NRRL 194 / M139) (Aspergillus nidulans)).